The chain runs to 489 residues: N-succinylglutamate 5-semialdehyde dehydrogenase 1 (489 aa).

223–228 (GSSRTG) contacts NAD(+). Residues Glu246 and Cys280 contribute to the active site.

It belongs to the aldehyde dehydrogenase family. AstD subfamily.

The enzyme catalyses N-succinyl-L-glutamate 5-semialdehyde + NAD(+) + H2O = N-succinyl-L-glutamate + NADH + 2 H(+). Its pathway is amino-acid degradation; L-arginine degradation via AST pathway; L-glutamate and succinate from L-arginine: step 4/5. Catalyzes the NAD-dependent reduction of succinylglutamate semialdehyde into succinylglutamate. The protein is N-succinylglutamate 5-semialdehyde dehydrogenase 1 of Pseudoalteromonas translucida (strain TAC 125).